The sequence spans 94 residues: Co-chaperonin GroES (94 aa).

This sequence belongs to the GroES chaperonin family. Heptamer of 7 subunits arranged in a ring. Interacts with the chaperonin GroEL.

It is found in the cytoplasm. Together with the chaperonin GroEL, plays an essential role in assisting protein folding. The GroEL-GroES system forms a nano-cage that allows encapsulation of the non-native substrate proteins and provides a physical environment optimized to promote and accelerate protein folding. GroES binds to the apical surface of the GroEL ring, thereby capping the opening of the GroEL channel. This Listeria innocua serovar 6a (strain ATCC BAA-680 / CLIP 11262) protein is Co-chaperonin GroES.